Consider the following 272-residue polypeptide: Putative UTP--glucose-1-phosphate uridylyltransferase (272 aa).

Belongs to the UDPGP type 2 family.

The catalysed reaction is alpha-D-glucose 1-phosphate + UTP + H(+) = UDP-alpha-D-glucose + diphosphate. This chain is Putative UTP--glucose-1-phosphate uridylyltransferase (ytdA), found in Bacillus subtilis (strain 168).